The following is a 331-amino-acid chain: uncharacterized protein (331 aa).

Pentapeptide repeat domains are found at residues 20–59 (LKLP…NLGQ), 60–99 (ANLV…ILRD), 100–139 (SDMT…NMRQ), 151–190 (AILG…DLRK), 191–230 (ADLS…KISE), 231–270 (AEMT…DLSR), and 271–310 (ANLT…DLMS).

This is an uncharacterized protein from Synechocystis sp. (strain ATCC 27184 / PCC 6803 / Kazusa).